The chain runs to 128 residues: uncharacterized protein (128 aa).

4 helical membrane-spanning segments follow: residues 2-22 (LPFYFLSVATNAAIGFILTVL), 34-54 (FLYDATFSLVLALLSGIAAVC), 64-84 (LPVLGDLIPTLAGGTGCALFL), and 108-128 (LGLFSLAASILHLLFAPTLFL).

The protein localises to the cell membrane. This is an uncharacterized protein from Treponema pallidum (strain Nichols).